Reading from the N-terminus, the 428-residue chain is Gamma-glutamyl phosphate reductase (428 aa).

This sequence belongs to the gamma-glutamyl phosphate reductase family.

The protein resides in the cytoplasm. The catalysed reaction is L-glutamate 5-semialdehyde + phosphate + NADP(+) = L-glutamyl 5-phosphate + NADPH + H(+). It functions in the pathway amino-acid biosynthesis; L-proline biosynthesis; L-glutamate 5-semialdehyde from L-glutamate: step 2/2. Catalyzes the NADPH-dependent reduction of L-glutamate 5-phosphate into L-glutamate 5-semialdehyde and phosphate. The product spontaneously undergoes cyclization to form 1-pyrroline-5-carboxylate. In Streptomyces coelicolor (strain ATCC BAA-471 / A3(2) / M145), this protein is Gamma-glutamyl phosphate reductase.